The sequence spans 65 residues: Metallothionein-like protein type 3 (65 aa).

The protein belongs to the metallothionein superfamily. Type 15 family.

In terms of biological role, metallothioneins have a high content of cysteine residues that bind various heavy metals. In Musa acuminata (Banana), this protein is Metallothionein-like protein type 3.